Consider the following 460-residue polypeptide: Bifunctional beta-D-glucosidase/beta-D-fucosidase (460 aa).

Glu-168 serves as the catalytic Proton donor. Glu-362 functions as the Nucleophile in the catalytic mechanism.

It belongs to the glycosyl hydrolase 1 family. Monomer.

Its subcellular location is the secreted. The catalysed reaction is Hydrolysis of terminal, non-reducing beta-D-glucosyl residues with release of beta-D-glucose.. The enzyme catalyses Hydrolysis of terminal non-reducing beta-D-fucose residues in beta-D-fucosides.. With respect to regulation, inhibited by Cu(2+), Ag(+) and Hg(+), but not by other cations such as Mg(2+), Ca(2+), Mn(2+) and Co(2+). Inhibited by 1-amino-1-deoxy-D-glucose and p-chloromercuribenzoic acid, but not by EDTA or dithiothreitol. Inhibited by the disaccharides sucrose, lactose and cellobiose. The monosaccharides D-fructose, D-mannose, D-xylose and D-glucose increase the beta-D-fucosidase activity, but not the beta-D-glucosidase activity. D-glucose inhibits the beta-D-glucosidase activity, but promotes the beta-D-fucosidase activity. D-fucose inhibits the beta-D-glucosidase activity and does not significantly affect the beta-D-fucosidase activity. Bifunctional beta-D-glucosidase/beta-D-fucosidase. Activity towards pNP-beta-D-fucoside is about 80-85% of the activity towards pNP-beta-D-glucoside. Also has slight activity (less than 10%) towards pNP-beta-D-galactoside, and very low activity (less than 1%) towards pNP-beta-D-xyloside. Hydrolyzes laminaribiose, sophorose, cellobiose and gentobiose. Not active against maltose, pNP-alpha-D-glucoside or pNP-beta-L-fucoside. The sequence is that of Bifunctional beta-D-glucosidase/beta-D-fucosidase from Bifidobacterium breve.